Consider the following 653-residue polypeptide: Fusexin 1 (653 aa).

The first 24 residues, 1 to 24, serve as a signal peptide directing secretion; sequence MKRVGNCWKASVAAFFLLMFTAFA. At 25–559 the chain is on the extracellular side; the sequence is AADTTSVDTV…FENIWSGDAN (535 aa). 4 cysteine pairs are disulfide-bonded: Cys-129–Cys-167, Cys-398–Cys-441, Cys-468–Cys-487, and Cys-499–Cys-516. The segment at 155-160 is fusion loop; that stretch reads DYWTGS. The chain crosses the membrane as a helical span at residues 560 to 580; it reads ALNWLQVFVTFIAFLGGFALV. The Cytoplasmic segment spans residues 581 to 604; the sequence is GVKLGKIVDGLATEFIPVKDSHVR. A run of 2 helical transmembrane segments spans residues 605 to 625 and 626 to 646; these read LVIG…LVTD and PLGL…YLSA. At 647–653 the chain is on the cytoplasmic side; that stretch reads SAPEINL.

The protein belongs to the HAP2/GCS1 family. Fusexin 1 subfamily. In terms of assembly, homotrimer stabilized by interdomain contacts and numerous Ca(2+) and Na(+) ions.

It is found in the cell surface. The protein resides in the cell membrane. Its function is as follows. Exhibits fusogenic activity. Mediates cell-cell fusion in mammalian cells (bilateral fusion). In Haloplanus natans (strain DSM 17983 / JCM 14081 / CGMCC 1.8972 / RE-101), this protein is Fusexin 1.